The primary structure comprises 196 residues: DnaA initiator-associating protein DiaA (196 aa).

Residues 34–196 (LVQSLLNGNK…DNTLFPHQND (163 aa)) form the SIS domain.

This sequence belongs to the SIS family. DiaA subfamily. Homotetramer; dimer of dimers.

Its function is as follows. Required for the timely initiation of chromosomal replication via direct interactions with the DnaA initiator protein. This Yersinia pestis bv. Antiqua (strain Antiqua) protein is DnaA initiator-associating protein DiaA.